A 768-amino-acid polypeptide reads, in one-letter code: Probable beta-glucosidase M (768 aa).

The signal sequence occupies residues 1 to 19; it reads MHAIAGLTGFLAGVSLSYA. 3 N-linked (GlcNAc...) asparagine glycosylation sites follow: Asn25, Asn72, and Asn259. The active site involves Asp287. 7 N-linked (GlcNAc...) asparagine glycosylation sites follow: Asn315, Asn322, Asn394, Asn434, Asn472, Asn543, and Asn651.

It belongs to the glycosyl hydrolase 3 family.

It localises to the secreted. It catalyses the reaction Hydrolysis of terminal, non-reducing beta-D-glucosyl residues with release of beta-D-glucose.. Its pathway is glycan metabolism; cellulose degradation. In terms of biological role, beta-glucosidases are one of a number of cellulolytic enzymes involved in the degradation of cellulosic biomass. Catalyzes the last step releasing glucose from the inhibitory cellobiose. The sequence is that of Probable beta-glucosidase M (bglM) from Aspergillus flavus (strain ATCC 200026 / FGSC A1120 / IAM 13836 / NRRL 3357 / JCM 12722 / SRRC 167).